We begin with the raw amino-acid sequence, 201 residues long: IMP cyclohydrolase (201 aa).

It belongs to the archaeal IMP cyclohydrolase family.

It catalyses the reaction IMP + H2O = 5-formamido-1-(5-phospho-D-ribosyl)imidazole-4-carboxamide. Its pathway is purine metabolism; IMP biosynthesis via de novo pathway; IMP from 5-formamido-1-(5-phospho-D-ribosyl)imidazole-4-carboxamide: step 1/1. Its function is as follows. Catalyzes the cyclization of 5-formylamidoimidazole-4-carboxamide ribonucleotide to IMP. This Methanococcus maripaludis (strain C7 / ATCC BAA-1331) protein is IMP cyclohydrolase.